Consider the following 314-residue polypeptide: PDZ domain-containing protein GIPC2 (314 aa).

Positions Met1 to Ala12 are enriched in basic residues. A disordered region spans residues Met1–Pro36. The span at Lys13–Arg25 shows a compositional bias: basic and acidic residues. Positions Glu117–Glu197 constitute a PDZ domain.

It belongs to the GIPC family. Probably interacts with SEMA5A.

Its subcellular location is the cytoplasm. The polypeptide is PDZ domain-containing protein GIPC2 (Gipc2) (Rattus norvegicus (Rat)).